The primary structure comprises 27 residues: Augerpeptide hhe6.2 (27 aa).

3 disulfide bridges follow: cysteine 4/cysteine 13, cysteine 8/cysteine 20, and cysteine 12/cysteine 27.

As to expression, expressed by the venom duct.

Its subcellular location is the secreted. The polypeptide is Augerpeptide hhe6.2 (Hastula hectica (Sea snail)).